Consider the following 638-residue polypeptide: XK-related protein 6 (638 aa).

2 disordered regions span residues 24 to 43 (VGSG…GGDG) and 82 to 117 (RSAA…PASP). Positions 33-43 (PGGGGCGGGDG) are enriched in gly residues. 7 consecutive transmembrane segments (helical) span residues 127-147 (LWIV…LWLA), 158-178 (CFGL…SLSF), 315-335 (TLPC…LASY), 369-389 (VISF…FVVV), 410-430 (WEEI…WFNV), 439-459 (MFAY…LWYF), and 470-490 (AVPA…LMLL).

Belongs to the XK family.

It localises to the cell membrane. This is XK-related protein 6 from Mus musculus (Mouse).